Reading from the N-terminus, the 620-residue chain is KIF-binding protein (620 aa).

Coiled coils occupy residues 30-64 and 133-169; these read YKSK…QDIL and LIKS…QLQN.

Belongs to the KIF-binding protein family.

The protein resides in the cytoplasm. It is found in the cytoskeleton. Functionally, activator of KIF1B plus-end-directed microtubule motor activity. Required for organization of axonal microtubules, and axonal outgrowth and maintenance during peripheral and central nervous system development. In Dictyostelium discoideum (Social amoeba), this protein is KIF-binding protein (kifbp).